The following is a 340-amino-acid chain: Protein RecA (340 aa).

65-72 (GPESGGKT) is a binding site for ATP.

Belongs to the RecA family.

It localises to the cytoplasm. Its function is as follows. Can catalyze the hydrolysis of ATP in the presence of single-stranded DNA, the ATP-dependent uptake of single-stranded DNA by duplex DNA, and the ATP-dependent hybridization of homologous single-stranded DNAs. It interacts with LexA causing its activation and leading to its autocatalytic cleavage. In Thermus aquaticus, this protein is Protein RecA.